We begin with the raw amino-acid sequence, 355 residues long: Uroporphyrinogen decarboxylase (355 aa).

Residues 27–31 (RQAGR), D78, Y155, S210, and H328 each bind substrate.

This sequence belongs to the uroporphyrinogen decarboxylase family. Homodimer.

The protein resides in the cytoplasm. It carries out the reaction uroporphyrinogen III + 4 H(+) = coproporphyrinogen III + 4 CO2. The protein operates within porphyrin-containing compound metabolism; protoporphyrin-IX biosynthesis; coproporphyrinogen-III from 5-aminolevulinate: step 4/4. Functionally, catalyzes the decarboxylation of four acetate groups of uroporphyrinogen-III to yield coproporphyrinogen-III. The protein is Uroporphyrinogen decarboxylase of Pseudomonas aeruginosa (strain LESB58).